Reading from the N-terminus, the 4749-residue chain is Dynein heavy chain domain-containing protein 1 (4749 aa).

Over residues 1 to 18 the composition is skewed to low complexity; the sequence is MKPHSQTSPPSLPMPSTS. 3 disordered regions span residues 1 to 27, 275 to 308, and 2690 to 2785; these read MKPH…TQKP, ESSD…KKSS, and ESLA…KLQS. The span at 2696-2716 shows a compositional bias: acidic residues; it reads CEEEEVEEEKVPEVESEEEIA. Polar residues predominate over residues 2738–2749; sequence QATTGSFLSENS. A coiled-coil region spans residues 3197–3224; that stretch reads CQHQESLIENLVRQHDALKAQQEVFLEQ. Positions 3568-3667 are disordered; the sequence is PPKQNRSLEP…SLPSCLTVLS (100 aa). Residues 3578–3593 are compositionally biased toward basic and acidic residues; the sequence is SPKESKEKFHVTKQDS. Positions 3594–3636 form a coiled coil; it reads GDNTEDELEDENNEEEDEANEQRKEQKAEENKIQGENEQEVQE. Positions 3595–3612 are enriched in acidic residues; sequence DNTEDELEDENNEEEDEA. Basic and acidic residues predominate over residues 3613–3628; sequence NEQRKEQKAEENKIQG. The segment covering 3644–3655 has biased composition (low complexity); the sequence is ESSGSHSSLPSE. A compositionally biased stretch (polar residues) spans 3656-3667; that stretch reads TQSLPSCLTVLS. Coiled-coil stretches lie at residues 3818–3838 and 4431–4451; these read MVRT…LEDQ and ERQL…LQAL.

It belongs to the dynein heavy chain family. Expressed in spermatozoa (at protein level).

Its subcellular location is the cell projection. It localises to the cilium. It is found in the flagellum. In terms of biological role, essential for the normal function of sperm flagella axonemes. This chain is Dynein heavy chain domain-containing protein 1 (Dnhd1), found in Mus musculus (Mouse).